The following is a 145-amino-acid chain: Large ribosomal subunit protein uL15 (145 aa).

Residues 1-30 show a composition bias toward basic residues; sequence MAHSLRKTRKLRGHVSHGHGRIGKHRKHPG. The interval 1–48 is disordered; the sequence is MAHSLRKTRKLRGHVSHGHGRIGKHRKHPGGRGNAGGQHHHRINRDKY.

Belongs to the universal ribosomal protein uL15 family. As to quaternary structure, component of the large ribosomal subunit.

Its subcellular location is the cytoplasm. It is found in the cytosol. The protein localises to the rough endoplasmic reticulum. In terms of biological role, component of the large ribosomal subunit. This is Large ribosomal subunit protein uL15 (rpl-27a) from Oscheius tipulae.